Reading from the N-terminus, the 484-residue chain is ATP synthase subunit beta (484 aa).

156 to 163 (GGAGVGKT) serves as a coordination point for ATP.

This sequence belongs to the ATPase alpha/beta chains family. As to quaternary structure, F-type ATPases have 2 components, CF(1) - the catalytic core - and CF(0) - the membrane proton channel. CF(1) has five subunits: alpha(3), beta(3), gamma(1), delta(1), epsilon(1). CF(0) has three main subunits: a(1), b(2) and c(9-12). The alpha and beta chains form an alternating ring which encloses part of the gamma chain. CF(1) is attached to CF(0) by a central stalk formed by the gamma and epsilon chains, while a peripheral stalk is formed by the delta and b chains.

The protein resides in the cell inner membrane. The catalysed reaction is ATP + H2O + 4 H(+)(in) = ADP + phosphate + 5 H(+)(out). In terms of biological role, produces ATP from ADP in the presence of a proton gradient across the membrane. The catalytic sites are hosted primarily by the beta subunits. This is ATP synthase subunit beta from Rhizorhabdus wittichii (strain DSM 6014 / CCUG 31198 / JCM 15750 / NBRC 105917 / EY 4224 / RW1) (Sphingomonas wittichii).